Consider the following 1060-residue polypeptide: Valine--tRNA ligase, mitochondrial (1060 aa).

A mitochondrion-targeting transit peptide spans 1–15; that stretch reads MPHLPLASFRPPLWG. A disordered region spans residues 25–50; that stretch reads PQALCTQPEPHGSPVSRRNREAKQKR. A 'HIGH' region motif is present at residues 146–156; that stretch reads PNVTGSLHIGH. Lys-548 bears the N6-acetyllysine mark. A 'KMSKS' region motif is present at residues 659-663; that stretch reads KMSKS. Residue Lys-662 participates in ATP binding.

This sequence belongs to the class-I aminoacyl-tRNA synthetase family.

The protein resides in the mitochondrion. The enzyme catalyses tRNA(Val) + L-valine + ATP = L-valyl-tRNA(Val) + AMP + diphosphate. Catalyzes the attachment of valine to tRNA(Val) in a two-step reaction: valine is first activated by ATP to form Val-AMP and then transferred to the acceptor end of tRNA(Val). The chain is Valine--tRNA ligase, mitochondrial (Vars2) from Mus musculus (Mouse).